The primary structure comprises 517 residues: Lysophosphatidylcholine acyltransferase 2B (517 aa).

Asn-29 carries an N-linked (GlcNAc...) asparagine glycan. 3 consecutive transmembrane segments (helical) span residues 70–90 (IVFL…NLPI), 103–123 (LIKP…GFLI), and 137–157 (IFVV…VAGL). The HXXXXD motif motif lies at 143-148 (HSTFFD). EF-hand domains are found at residues 388–423 (PISE…LCNP) and 425–460 (NTEK…AFGV). The Ca(2+) site is built by Asp-401, Asn-403, Asp-405, Thr-407, Glu-412, Asp-438, Asp-440, Asp-442, Tyr-444, and Glu-449.

Belongs to the 1-acyl-sn-glycerol-3-phosphate acyltransferase family.

It localises to the membrane. Its pathway is lipid metabolism; phospholipid metabolism. In terms of biological role, probable acetyltransferase. The polypeptide is Lysophosphatidylcholine acyltransferase 2B (Lpcat2b) (Rattus norvegicus (Rat)).